Here is a 397-residue protein sequence, read N- to C-terminus: Elongation factor Tu (397 aa).

A tr-type G domain is found at 10 to 206; it reads KPHVNIGTIG…AVDASIPEPE (197 aa). Residues 19–26 form a G1 region; sequence GHIDHGKT. Residue 19 to 26 participates in GTP binding; that stretch reads GHIDHGKT. Thr-26 contacts Mg(2+). The interval 62–66 is G2; the sequence is GITIS. Residues 83–86 form a G3 region; sequence DCPG. Residues 83–87 and 138–141 contribute to the GTP site; these read DCPGH and NKAD. The interval 138-141 is G4; it reads NKAD. The interval 176-178 is G5; the sequence is SAL.

It belongs to the TRAFAC class translation factor GTPase superfamily. Classic translation factor GTPase family. EF-Tu/EF-1A subfamily. Monomer.

The protein resides in the cytoplasm. The enzyme catalyses GTP + H2O = GDP + phosphate + H(+). Functionally, GTP hydrolase that promotes the GTP-dependent binding of aminoacyl-tRNA to the A-site of ribosomes during protein biosynthesis. This chain is Elongation factor Tu, found in Parafrankia sp. (strain EAN1pec).